The sequence spans 303 residues: N-acetylmuramic acid 6-phosphate etherase (303 aa).

Positions 61–224 (IVQAFQQGGR…TTASMILLGK (164 aa)) constitute an SIS domain. The active-site Proton donor is the Glu-89. Glu-120 is a catalytic residue.

This sequence belongs to the GCKR-like family. MurNAc-6-P etherase subfamily. Homodimer.

It carries out the reaction N-acetyl-D-muramate 6-phosphate + H2O = N-acetyl-D-glucosamine 6-phosphate + (R)-lactate. It participates in amino-sugar metabolism; 1,6-anhydro-N-acetylmuramate degradation. Its pathway is amino-sugar metabolism; N-acetylmuramate degradation. The protein operates within cell wall biogenesis; peptidoglycan recycling. In terms of biological role, specifically catalyzes the cleavage of the D-lactyl ether substituent of MurNAc 6-phosphate, producing GlcNAc 6-phosphate and D-lactate. Together with AnmK, is also required for the utilization of anhydro-N-acetylmuramic acid (anhMurNAc) either imported from the medium or derived from its own cell wall murein, and thus plays a role in cell wall recycling. The chain is N-acetylmuramic acid 6-phosphate etherase (murQ) from Haemophilus influenzae (strain ATCC 51907 / DSM 11121 / KW20 / Rd).